Here is a 253-residue protein sequence, read N- to C-terminus: A-type ATP synthase subunit B (253 aa).

This sequence belongs to the ATPase alpha/beta chains family. In terms of assembly, has multiple subunits with at least A(3), B(3), C, D, E, F, H, I and proteolipid K(x).

It localises to the cell membrane. Its function is as follows. Component of the A-type ATP synthase that produces ATP from ADP in the presence of a proton gradient across the membrane. The B chain is a regulatory subunit. The polypeptide is A-type ATP synthase subunit B (Methanothermococcus thermolithotrophicus (Methanococcus thermolithotrophicus)).